A 593-amino-acid chain; its full sequence is Pyruvate decarboxylase 1 (593 aa).

Residues 1–19 (METETETPNGSTPCPTSAP) are compositionally biased toward polar residues. The interval 1-20 (METETETPNGSTPCPTSAPS) is disordered. Substrate is bound by residues D55 and H142. The thiamine pyrophosphate binding stretch occupies residues 420–502 (DSWFNCQKLR…FLINNGGYTI (83 aa)). D470, N497, and G499 together coordinate Mg(2+). E503 contributes to the substrate binding site.

The protein belongs to the TPP enzyme family. In terms of assembly, homotetramer. Requires a metal cation as cofactor. Thiamine diphosphate serves as cofactor.

The catalysed reaction is a 2-oxocarboxylate + H(+) = an aldehyde + CO2. In Pisum sativum (Garden pea), this protein is Pyruvate decarboxylase 1 (PDC1).